The primary structure comprises 249 residues: MRKKIVVGNWKMNKTVTESLVLAAEVTAALGEGFTGCDVGIAPPFTALYEVGKLTGSRLALVAQNCHFEPDGAFTGEVSASMVREAGCSAVIAGHSERRHCFGETNAIVNRKVKHALSEGLQVIMCAGETLEQREGGVTGDVVTAQVREGLLGIDDISNIVIAYEPVWAIGTGKTATSEQAEEVHLLIRNTVSDLFGEEAAGRLRIQYGGSVKPSNAKELFSMPNIDGGLIGGASLNAADFVAIVKAAV.

9–11 (NWK) contacts substrate. The active-site Electrophile is His-95. The Proton acceptor role is filled by Glu-165. Substrate contacts are provided by residues Gly-171, Ser-211, and 232 to 233 (GG).

This sequence belongs to the triosephosphate isomerase family. Homodimer.

The protein resides in the cytoplasm. It catalyses the reaction D-glyceraldehyde 3-phosphate = dihydroxyacetone phosphate. The protein operates within carbohydrate biosynthesis; gluconeogenesis. Its pathway is carbohydrate degradation; glycolysis; D-glyceraldehyde 3-phosphate from glycerone phosphate: step 1/1. Its function is as follows. Involved in the gluconeogenesis. Catalyzes stereospecifically the conversion of dihydroxyacetone phosphate (DHAP) to D-glyceraldehyde-3-phosphate (G3P). The sequence is that of Triosephosphate isomerase from Chlorobium phaeobacteroides (strain DSM 266 / SMG 266 / 2430).